A 258-amino-acid polypeptide reads, in one-letter code: Archaerhodopsin-3 (258 aa).

A propeptide spanning residues 1 to 6 (MDPIAL) is cleaved from the precursor. Gln7 carries the post-translational modification Pyrrolidone carboxylic acid. At 7–18 (QAGYDLLGDGRP) the chain is on the extracellular side. The chain crosses the membrane as a helical span at residues 19–40 (ETLWLGIGTLLMLIGTFYFLVR). Residues 41–49 (GWGVTDKDA) lie on the Cytoplasmic side of the membrane. The helical transmembrane segment at 50–71 (REYYAVTILVPGIASAAYLSMF) threads the bilayer. At 72–89 (FGIGLTEVTVGGEMLDIY) the chain is on the extracellular side. A helical transmembrane segment spans residues 90–111 (YARYADWLFTTPLLLLDLALLA). Residues 112–114 (KVD) lie on the Cytoplasmic side of the membrane. The chain crosses the membrane as a helical span at residues 115-137 (RVTIGTLVGVDALMIVTGLIGAL). Topologically, residues 138-141 (SHTA) are extracellular. The chain crosses the membrane as a helical span at residues 142–170 (IARYSWWLFSTICMIVVLYFLATSLRSAA). Residues 171-173 (KER) are Cytoplasmic-facing. The helical transmembrane segment at 174 to 202 (GPEVASTFNTLTALVLVLWTAYPILWIIG) threads the bilayer. Over 203–210 (TEGAGVVG) the chain is Extracellular. Residues 211 to 243 (LGIETLLFMVLDVTAKVGFGFILLRSRAILGDT) traverse the membrane as a helical segment. N6-(retinylidene)lysine is present on Lys226. The Cytoplasmic portion of the chain corresponds to 244–258 (EAPEPSAGADVSAAD).

Belongs to the archaeal/bacterial/fungal opsin family.

The protein localises to the cell membrane. Its function is as follows. Light-driven proton pump. This chain is Archaerhodopsin-3 (aop3), found in Halorubrum sodomense.